The primary structure comprises 514 residues: Peptide chain release factor 3 (514 aa).

The region spanning 8–268 (KKRRTFAIIS…TFLEFAPEPH (261 aa)) is the tr-type G domain. Residues 17 to 24 (SHPDAGKT), 85 to 89 (DTPGH), and 139 to 142 (NKLD) each bind GTP.

Belongs to the TRAFAC class translation factor GTPase superfamily. Classic translation factor GTPase family. PrfC subfamily.

The protein resides in the cytoplasm. In terms of biological role, increases the formation of ribosomal termination complexes and stimulates activities of RF-1 and RF-2. It binds guanine nucleotides and has strong preference for UGA stop codons. It may interact directly with the ribosome. The stimulation of RF-1 and RF-2 is significantly reduced by GTP and GDP, but not by GMP. The chain is Peptide chain release factor 3 from Streptococcus pyogenes serotype M18 (strain MGAS8232).